Consider the following 158-residue polypeptide: Small ribosomal subunit protein uS7c (158 aa).

This sequence belongs to the universal ribosomal protein uS7 family. In terms of assembly, part of the 30S ribosomal subunit.

The protein localises to the plastid. Its subcellular location is the chloroplast. Its function is as follows. One of the primary rRNA binding proteins, it binds directly to 16S rRNA where it nucleates assembly of the head domain of the 30S subunit. This is Small ribosomal subunit protein uS7c (rps7) from Trieres chinensis (Marine centric diatom).